A 233-amino-acid chain; its full sequence is Large ribosomal subunit protein uL1 (233 aa).

It belongs to the universal ribosomal protein uL1 family. As to quaternary structure, part of the 50S ribosomal subunit.

In terms of biological role, binds directly to 23S rRNA. The L1 stalk is quite mobile in the ribosome, and is involved in E site tRNA release. Its function is as follows. Protein L1 is also a translational repressor protein, it controls the translation of the L11 operon by binding to its mRNA. This chain is Large ribosomal subunit protein uL1, found in Vibrio parahaemolyticus serotype O3:K6 (strain RIMD 2210633).